We begin with the raw amino-acid sequence, 328 residues long: Gonadotropin-releasing hormone receptor (328 aa).

Residues M1–R38 lie on the Extracellular side of the membrane. N18 is a glycosylation site (N-linked (GlcNAc...) asparagine). The chain crosses the membrane as a helical span at residues V39–K59. At L60–T84 the chain is on the cytoplasmic side. The helical transmembrane segment at L85–V105 threads the bilayer. The Extracellular segment spans residues Q106–K115. Residues C114 and C196 are joined by a disulfide bond. The chain crosses the membrane as a helical span at residues V116–S136. Topologically, residues L137–R157 are cytoplasmic. The helical transmembrane segment at S158–F178 threads the bilayer. At R179 to Q208 the chain is on the extracellular side. The helical transmembrane segment at A209 to I229 threads the bilayer. Topologically, residues C230–A271 are cytoplasmic. A helical membrane pass occupies residues F272–F292. Over D293–H306 the chain is Extracellular. Residues F307–S327 traverse the membrane as a helical segment. Residue L328 is a topological domain, cytoplasmic.

Belongs to the G-protein coupled receptor 1 family.

It is found in the cell membrane. Its function is as follows. Receptor for gonadotropin releasing hormone (GnRH) that mediates the action of GnRH to stimulate the secretion of the gonadotropic hormones luteinizing hormone (LH) and follicle-stimulating hormone (FSH). This receptor mediates its action by association with G-proteins that activate a phosphatidylinositol-calcium second messenger system. The protein is Gonadotropin-releasing hormone receptor (GNRHR) of Equus caballus (Horse).